We begin with the raw amino-acid sequence, 445 residues long: Membrane protein insertase YidC (445 aa).

Helical transmembrane passes span 6–26 (VVAI…PIKV), 248–268 (FGWA…PLYH), 313–333 (ASGC…WSVI), 352–372 (LSAG…VASY), and 388–408 (GIIM…GLFL).

It belongs to the OXA1/ALB3/YidC family. Type 1 subfamily. Interacts with the Sec translocase complex via SecD. Specifically interacts with transmembrane segments of nascent integral membrane proteins during membrane integration.

It localises to the cell inner membrane. In terms of biological role, required for the insertion and/or proper folding and/or complex formation of integral membrane proteins into the membrane. Involved in integration of membrane proteins that insert both dependently and independently of the Sec translocase complex, as well as at least some lipoproteins. Aids folding of multispanning membrane proteins. This Thermotoga maritima (strain ATCC 43589 / DSM 3109 / JCM 10099 / NBRC 100826 / MSB8) protein is Membrane protein insertase YidC.